A 122-amino-acid polypeptide reads, in one-letter code: Large ribosomal subunit protein uL14 (122 aa).

It belongs to the universal ribosomal protein uL14 family. As to quaternary structure, part of the 50S ribosomal subunit. Forms a cluster with proteins L3 and L19. In the 70S ribosome, L14 and L19 interact and together make contacts with the 16S rRNA in bridges B5 and B8.

Its function is as follows. Binds to 23S rRNA. Forms part of two intersubunit bridges in the 70S ribosome. This Chloroflexus aurantiacus (strain ATCC 29366 / DSM 635 / J-10-fl) protein is Large ribosomal subunit protein uL14.